A 164-amino-acid chain; its full sequence is MAEDSTNQQTSEQGQQAQFAIQKIYVKDLSFETPNSPHIFNQEQEWKPEFNLQLSNKNQRIAENVHEVVLSLTVTAKLGDQTAFLVEVHQAGIFMLNGYGEESLGSLLGSYCPNILFPFAREVVADLVTKGGFPPLLLAPVNFDALYAQQQQQRQSAGAAEVRH.

The protein belongs to the SecB family. In terms of assembly, homotetramer, a dimer of dimers. One homotetramer interacts with 1 SecA dimer.

The protein resides in the cytoplasm. Its function is as follows. One of the proteins required for the normal export of preproteins out of the cell cytoplasm. It is a molecular chaperone that binds to a subset of precursor proteins, maintaining them in a translocation-competent state. It also specifically binds to its receptor SecA. The sequence is that of Protein-export protein SecB from Nitrosococcus oceani (strain ATCC 19707 / BCRC 17464 / JCM 30415 / NCIMB 11848 / C-107).